A 583-amino-acid chain; its full sequence is Potassium-transporting ATPase potassium-binding subunit (583 aa).

10 helical membrane passes run 3–23, 66–86, 135–155, 177–197, 266–286, 293–313, 402–422, 440–460, 506–526, and 549–569; these read NIIW…WPLG, MACV…LLMA, GLTV…FALI, VLYI…EQGV, LEML…GAKI, VAIF…TVQA, GLYG…LMVG, AVVV…LMCL, VLLG…ILAM, and LFIF…FFPA.

The protein belongs to the KdpA family. The system is composed of three essential subunits: KdpA, KdpB and KdpC.

The protein localises to the cell inner membrane. In terms of biological role, part of the high-affinity ATP-driven potassium transport (or Kdp) system, which catalyzes the hydrolysis of ATP coupled with the electrogenic transport of potassium into the cytoplasm. This subunit binds the periplasmic potassium ions and delivers the ions to the membrane domain of KdpB through an intramembrane tunnel. This chain is Potassium-transporting ATPase potassium-binding subunit, found in Desulfovibrio desulfuricans (strain ATCC 27774 / DSM 6949 / MB).